Consider the following 605-residue polypeptide: Isocitrate dehydrogenase kinase/phosphatase (605 aa).

Residues 327 to 333 (APGIKGL) and Lys-348 contribute to the ATP site. Asp-383 is a catalytic residue.

This sequence belongs to the AceK family.

Its subcellular location is the cytoplasm. The enzyme catalyses L-seryl-[isocitrate dehydrogenase] + ATP = O-phospho-L-seryl-[isocitrate dehydrogenase] + ADP + H(+). Functionally, bifunctional enzyme which can phosphorylate or dephosphorylate isocitrate dehydrogenase (IDH) on a specific serine residue. This is a regulatory mechanism which enables bacteria to bypass the Krebs cycle via the glyoxylate shunt in response to the source of carbon. When bacteria are grown on glucose, IDH is fully active and unphosphorylated, but when grown on acetate or ethanol, the activity of IDH declines drastically concomitant with its phosphorylation. The protein is Isocitrate dehydrogenase kinase/phosphatase of Burkholderia multivorans (strain ATCC 17616 / 249).